Consider the following 145-residue polypeptide: MKIKIQKIHPNALIPKYQTEGSSGFDLHAIEEVMIKPHSVGLVKIGICLSLEVGYELQVRTRSGLALNHQVVVLNSPGTVDNDYRGEIKVILANLSDKDFKVQVGDRIAQGVVQKTYKAEFIECEQLDETSRGSGGFGSTGVSKA.

Substrate is bound by residues 62–64 (RSG), N75, 79–81 (TVD), and K89.

Belongs to the dUTPase family. Requires Mg(2+) as cofactor.

The enzyme catalyses dUTP + H2O = dUMP + diphosphate + H(+). It functions in the pathway pyrimidine metabolism; dUMP biosynthesis; dUMP from dCTP (dUTP route): step 2/2. In terms of biological role, this enzyme is involved in nucleotide metabolism: it produces dUMP, the immediate precursor of thymidine nucleotides and it decreases the intracellular concentration of dUTP so that uracil cannot be incorporated into DNA. The chain is Deoxyuridine 5'-triphosphate nucleotidohydrolase from Helicobacter pylori (strain Shi470).